A 163-amino-acid chain; its full sequence is uncharacterized protein (163 aa).

This is an uncharacterized protein from Caenorhabditis elegans.